A 551-amino-acid polypeptide reads, in one-letter code: uncharacterized protein (551 aa).

This sequence belongs to the GSP E family.

This is an uncharacterized protein from Methanocaldococcus jannaschii (strain ATCC 43067 / DSM 2661 / JAL-1 / JCM 10045 / NBRC 100440) (Methanococcus jannaschii).